Here is a 157-residue protein sequence, read N- to C-terminus: Succinate dehydrogenase assembly factor 2-B, mitochondrial (157 aa).

Residues 1-24 (MLRQFLFSTASRRLVRPMIAPHRS) constitute a mitochondrion transit peptide.

It belongs to the SDHAF2 family. As to quaternary structure, interacts with the flavoprotein subunit within the SDH catalytic dimer.

It localises to the mitochondrion matrix. Its function is as follows. Plays an essential role in the assembly of succinate dehydrogenase (SDH), an enzyme complex (also referred to as respiratory complex II) that is a component of both the tricarboxylic acid (TCA) cycle and the mitochondrial electron transport chain, and which couples the oxidation of succinate to fumarate with the reduction of ubiquinone (coenzyme Q) to ubiquinol. Required for flavinylation (covalent attachment of FAD) of the flavoprotein subunit of the SDH catalytic dimer. The chain is Succinate dehydrogenase assembly factor 2-B, mitochondrial from Drosophila persimilis (Fruit fly).